The chain runs to 284 residues: ASC1-like protein 3 (284 aa).

6 consecutive transmembrane segments (helical) span residues 9-29 (SSFF…RFFL), 69-89 (LTYY…EPWS), 108-128 (LMLF…ALVA), 148-168 (ILIG…ILAL), 195-215 (FGLF…FWII), and 243-263 (MLLT…LMIM). The TLC domain maps to 60-267 (VKFSESIWKL…ICLMIMKQLN (208 aa)).

The protein resides in the endoplasmic reticulum membrane. In terms of biological role, mediates resistance to sphinganine-analog mycotoxins (SAMs) by restoring the sphingolipid biosynthesis. Could salvage the transport of GPI-anchored proteins from the endoplasmic reticulum to the Golgi apparatus in ceramides-depleted cells after SAM exposure. This Oryza sativa subsp. japonica (Rice) protein is ASC1-like protein 3.